We begin with the raw amino-acid sequence, 158 residues long: Inorganic pyrophosphatase (158 aa).

A Mg(2+)-binding site is contributed by Glu8. Substrate-binding residues include Lys16, Arg30, and Tyr42. The Mg(2+) site is built by Asp52, Asp57, Asp84, and Asp89. The active-site Proton acceptor is Asp89. Tyr125 contributes to the substrate binding site.

The protein belongs to the PPase family. Homohexamer. Mg(2+) serves as cofactor.

The protein localises to the cytoplasm. The catalysed reaction is diphosphate + H2O = 2 phosphate + H(+). Its function is as follows. Catalyzes the hydrolysis of inorganic pyrophosphate (PPi) forming two phosphate ions. The chain is Inorganic pyrophosphatase from Corynebacterium glutamicum (strain ATCC 13032 / DSM 20300 / JCM 1318 / BCRC 11384 / CCUG 27702 / LMG 3730 / NBRC 12168 / NCIMB 10025 / NRRL B-2784 / 534).